Here is a 267-residue protein sequence, read N- to C-terminus: RWD domain-containing protein 3 (267 aa).

Residues 7 to 114 (QELSALAAIF…LWTQQNLRHI (108 aa)) form the RWD domain. Interaction with UBE2I/UBC9 stretches follow at residues 13-15 (AAI) and 100-102 (VHE).

As to quaternary structure, interacts with UBE2I/UBC9, NFKBIA, HIF1A and NCOA2.

The protein localises to the nucleus. The protein resides in the cytoplasm. In terms of biological role, enhancer of SUMO conjugation. Via its interaction with UBE2I/UBC9, increases SUMO conjugation to proteins by promoting the binding of E1 and E2 enzymes, thioester linkage between SUMO and UBE2I/UBC9 and transfer of SUMO to specific target proteins which include HIF1A, PIAS, NFKBIA, NR3C1 and TOP1. Positively regulates the NF-kappa-B signaling pathway by enhancing the sumoylation of NF-kappa-B inhibitor alpha (NFKBIA), promoting its stabilization which consequently leads to an increased inhibition of NF-kappa-B transcriptional activity. Negatively regulates the hypoxia-inducible factor-1 alpha (HIF1A) signaling pathway by increasing the sumoylation of HIF1A, promoting its stabilization, transcriptional activity and the expression of its target gene VEGFA during hypoxia. Has no effect on ubiquitination. The polypeptide is RWD domain-containing protein 3 (Rwdd3) (Rattus norvegicus (Rat)).